A 213-amino-acid polypeptide reads, in one-letter code: Proteasome subunit beta (213 aa).

The propeptide at 1 to 11 is removed in mature form; by autocatalysis; that stretch reads MSMIEEKIYKG. The active-site Nucleophile is Thr12.

Belongs to the peptidase T1B family. In terms of assembly, the 20S proteasome core is composed of 14 alpha and 14 beta subunits that assemble into four stacked heptameric rings, resulting in a barrel-shaped structure. The two inner rings, each composed of seven catalytic beta subunits, are sandwiched by two outer rings, each composed of seven alpha subunits. The catalytic chamber with the active sites is on the inside of the barrel. Has probably a gated structure, the ends of the cylinder being occluded by the N-termini of the alpha-subunits. Is likely capped at one or both ends by the proteasome regulatory ATPase, PAN.

Its subcellular location is the cytoplasm. The catalysed reaction is Cleavage of peptide bonds with very broad specificity.. The formation of the proteasomal ATPase PAN-20S proteasome complex, via the docking of the C-termini of PAN into the intersubunit pockets in the alpha-rings, triggers opening of the gate for substrate entry. Interconversion between the open-gate and close-gate conformations leads to a dynamic regulation of the 20S proteasome proteolysis activity. Component of the proteasome core, a large protease complex with broad specificity involved in protein degradation. The chain is Proteasome subunit beta from Archaeoglobus fulgidus (strain ATCC 49558 / DSM 4304 / JCM 9628 / NBRC 100126 / VC-16).